We begin with the raw amino-acid sequence, 536 residues long: Quinate permease (536 aa).

The Cytoplasmic segment spans residues 1-26 (MTLLALKEDRPTPKAVYNWRVYTCAA). The helical transmembrane segment at 27–47 (IASFASCMIGYDSSFIGTTLA) threads the bilayer. Residues 48–74 (LPSFTKEFDFASYTPGALALLQSNIVS) lie on the Extracellular side of the membrane. The chain crosses the membrane as a helical span at residues 75–95 (VYQAGAFFGSLFAFATSYFLG). Residues 96–98 (RRR) are Cytoplasmic-facing. Residues 99-119 (SLIAFSVVFIIGAAIMLAADG) form a helical membrane-spanning segment. Residues 120–131 (QRRGVDPIIAGR) lie on the Extracellular side of the membrane. A helical membrane pass occupies residues 132–152 (VLAGIGVGGASNMVPIYISEL). The Cytoplasmic portion of the chain corresponds to 153–160 (APPAVRGR). Residues 161–181 (LVGIYELGWQIGGLVGFWINY) form a helical membrane-spanning segment. Over 182 to 195 (GVNTTMAPTRSQWL) the chain is Extracellular. N-linked (GlcNAc...) asparagine glycosylation occurs at Asn184. A helical transmembrane segment spans residues 196-216 (IPFAVQLIPAGLLFLGSFWIP). At 217 to 285 (ESPRWLFANG…SLKQPKVRWR (69 aa)) the chain is on the cytoplasmic side. Residues 286–306 (FFLGGMLFLWQNGSGINAINY) form a helical membrane-spanning segment. At 307–327 (YSPTVFRSIGITGTNTGFLTT) the chain is on the extracellular side. A helical transmembrane segment spans residues 328–349 (GIFGVVKMVLTIIWLLWLVDLV). The Cytoplasmic segment spans residues 350 to 352 (GRR). A helical membrane pass occupies residues 353–373 (RILFVGATGGSLCMWFIGAYI). Residues 374–389 (KIAGPGTTKTEEAKLT) lie on the Extracellular side of the membrane. The chain crosses the membrane as a helical span at residues 390 to 410 (SGGIAAIFFFYLWTAFYTPSW). At 411 to 435 (NGTPWVINSEMFDQNTRSLGQASAA) the chain is on the cytoplasmic side. The chain crosses the membrane as a helical span at residues 436-456 (ANNWFWNFIISRFTPQMFIKM). Residues 457–458 (EY) are Extracellular-facing. The helical transmembrane segment at 459 to 479 (GVYFFFASLMLLSVVFIYFFI) threads the bilayer. Residues 480–536 (PETKSIPLEAMDRLFAIKSVHNANKILMDELNFDRNPEREQSSLDEKDRVTQTENAV) are Cytoplasmic-facing. Residues 516–530 (PEREQSSLDEKDRVT) are compositionally biased toward basic and acidic residues. The segment at 516 to 536 (PEREQSSLDEKDRVTQTENAV) is disordered.

Belongs to the major facilitator superfamily. Sugar transporter (TC 2.A.1.1) family.

It is found in the membrane. This Neurospora africana protein is Quinate permease (qa-y).